The chain runs to 2180 residues: DNA polymerase epsilon catalytic subunit A (2180 aa).

Zn(2+) contacts are provided by Cys-2067, Cys-2070, Cys-2089, and Cys-2092. Residues 2067-2092 (CENCAYFSDLDICMSDLRSMFKCSKC) form a CysA-type zinc finger. Residues Cys-2123, Cys-2126, Cys-2138, and Cys-2140 each contribute to the [4Fe-4S] cluster site. The CysB motif motif lies at 2123 to 2140 (CAKCRKIKSDTMSAYCTC).

The protein belongs to the DNA polymerase type-B family. In terms of assembly, heterotetramer. Consists of 4 subunits: POL2, DPB2, DPB3 and DPB4. [4Fe-4S] cluster serves as cofactor.

It is found in the nucleus. The catalysed reaction is DNA(n) + a 2'-deoxyribonucleoside 5'-triphosphate = DNA(n+1) + diphosphate. In terms of biological role, DNA polymerase II participates in chromosomal DNA replication. The protein is DNA polymerase epsilon catalytic subunit A (POL2) of Eremothecium gossypii (strain ATCC 10895 / CBS 109.51 / FGSC 9923 / NRRL Y-1056) (Yeast).